Here is a 164-residue protein sequence, read N- to C-terminus: HTH-type transcriptional regulator PapX (164 aa).

One can recognise an HTH marR-type domain in the interval 25–159 (EHLLMQLCIR…FEVISKKLLA (135 aa)).

Its subcellular location is the cytoplasm. In Escherichia coli, this protein is HTH-type transcriptional regulator PapX (papX).